The following is a 588-amino-acid chain: Retrograde regulation protein 2 (588 aa).

Belongs to the GppA/Ppx family.

Required for a novel path of interorganelle communication between mitochondria, peroxisomes and the nucleus, thereby maintaining a functional metabolic interaction between the tricarboxylic acid and glyoxylate cycles. In particular, required for the retrograde expression of the peroxisomal isoform of citrate synthase, CIT2. This is Retrograde regulation protein 2 (RTG2) from Saccharomyces cerevisiae (strain ATCC 204508 / S288c) (Baker's yeast).